We begin with the raw amino-acid sequence, 306 residues long: Pantothenate kinase (306 aa).

Gly-90–Ser-97 contacts ATP.

The protein belongs to the prokaryotic pantothenate kinase family.

Its subcellular location is the cytoplasm. The enzyme catalyses (R)-pantothenate + ATP = (R)-4'-phosphopantothenate + ADP + H(+). It participates in cofactor biosynthesis; coenzyme A biosynthesis; CoA from (R)-pantothenate: step 1/5. The protein is Pantothenate kinase of Listeria welshimeri serovar 6b (strain ATCC 35897 / DSM 20650 / CCUG 15529 / CIP 8149 / NCTC 11857 / SLCC 5334 / V8).